Here is a 277-residue protein sequence, read N- to C-terminus: tRNA uridine(34) hydroxylase (277 aa).

The 96-residue stretch at 126–221 (SSPDVHVIDT…YLETVRGDDS (96 aa)) folds into the Rhodanese domain. Cysteine 181 serves as the catalytic Cysteine persulfide intermediate.

The protein belongs to the TrhO family.

The enzyme catalyses uridine(34) in tRNA + AH2 + O2 = 5-hydroxyuridine(34) in tRNA + A + H2O. In terms of biological role, catalyzes oxygen-dependent 5-hydroxyuridine (ho5U) modification at position 34 in tRNAs. The polypeptide is tRNA uridine(34) hydroxylase (Anaplasma marginale (strain Florida)).